We begin with the raw amino-acid sequence, 148 residues long: Large ribosomal subunit protein bL9 (148 aa).

This sequence belongs to the bacterial ribosomal protein bL9 family.

Binds to the 23S rRNA. This is Large ribosomal subunit protein bL9 from Solibacter usitatus (strain Ellin6076).